Here is a 520-residue protein sequence, read N- to C-terminus: GMP synthase [glutamine-hydrolyzing] (520 aa).

One can recognise a Glutamine amidotransferase type-1 domain in the interval 12-205 (KIIVLDYGSQ…AISICGARGD (194 aa)). The active-site Nucleophile is C89. Residues H179 and E181 contribute to the active site. Positions 206–395 (WSMDNFIDME…LGMPEEIVWR (190 aa)) constitute a GMPS ATP-PPase domain. Residue 233–239 (SGGVDSS) coordinates ATP.

As to quaternary structure, homodimer.

The catalysed reaction is XMP + L-glutamine + ATP + H2O = GMP + L-glutamate + AMP + diphosphate + 2 H(+). It functions in the pathway purine metabolism; GMP biosynthesis; GMP from XMP (L-Gln route): step 1/1. Catalyzes the synthesis of GMP from XMP. The chain is GMP synthase [glutamine-hydrolyzing] from Streptococcus pyogenes serotype M6 (strain ATCC BAA-946 / MGAS10394).